Reading from the N-terminus, the 42-residue chain is Photosystem I reaction center subunit IX (42 aa).

The chain crosses the membrane as a helical span at residues 7–27; sequence FLSSAPVLIMALLTFTAGILI.

The protein belongs to the PsaJ family.

It is found in the cellular thylakoid membrane. Functionally, may help in the organization of the PsaE and PsaF subunits. This chain is Photosystem I reaction center subunit IX, found in Microcystis aeruginosa (strain NIES-843 / IAM M-2473).